Reading from the N-terminus, the 220-residue chain is Deoxyribose-phosphate aldolase 2 (220 aa).

Residue Asp89 is the Proton donor/acceptor of the active site. Lys151 serves as the catalytic Schiff-base intermediate with acetaldehyde. Lys180 acts as the Proton donor/acceptor in catalysis.

It belongs to the DeoC/FbaB aldolase family. DeoC type 1 subfamily.

The protein resides in the cytoplasm. It catalyses the reaction 2-deoxy-D-ribose 5-phosphate = D-glyceraldehyde 3-phosphate + acetaldehyde. The protein operates within carbohydrate degradation; 2-deoxy-D-ribose 1-phosphate degradation; D-glyceraldehyde 3-phosphate and acetaldehyde from 2-deoxy-alpha-D-ribose 1-phosphate: step 2/2. In terms of biological role, catalyzes a reversible aldol reaction between acetaldehyde and D-glyceraldehyde 3-phosphate to generate 2-deoxy-D-ribose 5-phosphate. The sequence is that of Deoxyribose-phosphate aldolase 2 from Staphylococcus aureus (strain COL).